The following is a 120-amino-acid chain: ATP-dependent Clp protease adapter protein ClpS (120 aa).

It belongs to the ClpS family. Binds to the N-terminal domain of the chaperone ClpA.

Functionally, involved in the modulation of the specificity of the ClpAP-mediated ATP-dependent protein degradation. This is ATP-dependent Clp protease adapter protein ClpS from Pseudomonas savastanoi pv. phaseolicola (strain 1448A / Race 6) (Pseudomonas syringae pv. phaseolicola (strain 1448A / Race 6)).